The chain runs to 692 residues: MQPDLFSTASQADANATPEEPDASNPAARAAWLRDELNRHNYSYHVLDNPSIPDAEYDKLFRELQALETSHPELLVFDSPTQRVGALALSAFPQVTHSVPMLSLGNGFEDEDIIAFDKRVSDGLNSTEIEYATELKFDGLAINLRYEDGILVEAATRGDGATGENVTTNIRTVRAIPLRLHTATPPKVLDVRGEVMMYKADLAKLNARQRDAGGKEFANPRNAAAGSLRQLDSRITAQRTLRFFAYGIGMLEGAEMPPSHSALLDWYAELGLPVCAERAVVKGAAGLLEFYKAVGQKRPTLPYEIDGVVYKVNRVEQQQQLGFVSRAPRYAIAHKFPAEEALTTVQGIEVQVGRTGAITPVARLAPVLVGGVTVTNATLHNEDEVRRKDIQIGDTVIVRRAGDVIPEVVAYVPEKRPVDAQPFVMPTNCPVCNSPIVKLEDEAIARCSGGWVKCAAQRKGGLLHFVSRRAMDVEGLGDQLVEQLVDKHIITTAADLYKLGFRALAELDRMADKSAQNVMAALEKSKSTTLARFIYALGIRHVGEATAKELARHFGNLEALLQASEEQLLEVADIGPVVAQSIRSFLSDPLNMELIEQLQAAGVRWPEHVVENKPKPFAGKTFVLTGTLPTLSRDQAAEKIEAAGGKVAGSVSKKTSYVVAGADAGSKLAKAEELGITILDESALLQLLDTHE.

Residues 1–14 (MQPDLFSTASQADA) show a composition bias toward polar residues. Residues 1–27 (MQPDLFSTASQADANATPEEPDASNPA) form a disordered region. NAD(+) contacts are provided by residues 54-58 (DAEYD), 103-104 (SL), and E134. Residue K136 is the N6-AMP-lysine intermediate of the active site. 4 residues coordinate NAD(+): R157, E194, K311, and K335. Zn(2+) contacts are provided by C429, C432, C447, and C454. The BRCT domain occupies 612–692 (NKPKPFAGKT…ALLQLLDTHE (81 aa)).

The protein belongs to the NAD-dependent DNA ligase family. LigA subfamily. The cofactor is Mg(2+). Mn(2+) is required as a cofactor.

It carries out the reaction NAD(+) + (deoxyribonucleotide)n-3'-hydroxyl + 5'-phospho-(deoxyribonucleotide)m = (deoxyribonucleotide)n+m + AMP + beta-nicotinamide D-nucleotide.. DNA ligase that catalyzes the formation of phosphodiester linkages between 5'-phosphoryl and 3'-hydroxyl groups in double-stranded DNA using NAD as a coenzyme and as the energy source for the reaction. It is essential for DNA replication and repair of damaged DNA. This is DNA ligase from Janthinobacterium sp. (strain Marseille) (Minibacterium massiliensis).